The sequence spans 45 residues: uncharacterized protein (45 aa).

The segment at 2–25 (YQCLRCGGIFNKRREVVEHLLVGH) adopts a C2H2-type zinc-finger fold.

This is an uncharacterized protein from Sulfolobus spindle-shape virus 1 (SSV1).